The primary structure comprises 643 residues: Phosphomethylpyrimidine synthase (643 aa).

Residues N248, M277, Y306, H342, 362–364 (SRG), 403–406 (DGLR), and E442 each bind substrate. H446 serves as a coordination point for Zn(2+). Residue Y469 participates in substrate binding. H510 provides a ligand contact to Zn(2+). The [4Fe-4S] cluster site is built by C590, C593, and C598.

The protein belongs to the ThiC family. In terms of assembly, homodimer. Requires [4Fe-4S] cluster as cofactor.

The catalysed reaction is 5-amino-1-(5-phospho-beta-D-ribosyl)imidazole + S-adenosyl-L-methionine = 4-amino-2-methyl-5-(phosphooxymethyl)pyrimidine + CO + 5'-deoxyadenosine + formate + L-methionine + 3 H(+). Its pathway is cofactor biosynthesis; thiamine diphosphate biosynthesis. Functionally, catalyzes the synthesis of the hydroxymethylpyrimidine phosphate (HMP-P) moiety of thiamine from aminoimidazole ribotide (AIR) in a radical S-adenosyl-L-methionine (SAM)-dependent reaction. The protein is Phosphomethylpyrimidine synthase of Burkholderia orbicola (strain MC0-3).